A 681-amino-acid chain; its full sequence is Leucine-rich repeat, immunoglobulin-like domain and transmembrane domain-containing protein 3 (681 aa).

Residues 1–19 (MWLSACLCLVLSFLGGVNG) form the signal peptide. A glycan (N-linked (GlcNAc...) asparagine) is linked at Asn18. Topologically, residues 20 to 584 (TCPSQCSCEY…RVEGRGSQWS (565 aa)) are lumenal. LRR repeat units follow at residues 56–79 (PVDTSKLRIEKTVVRRLPAEAFYY), 80–103 (LVELQYLWLAYNSVASIETSSFYN), 104–128 (LRQLHELRLDGNSLTAFPWVSLLDM), 129–151 (PHLRTLDLHNNRIASVPNEAVRY), and 152–175 (LRNLTCLDLSSNRLTTLPPDFLDS). The Ig-like domain occupies 254 to 344 (PSVMMSATKI…GISEAVVTVT (91 aa)). An intrachain disulfide couples Cys275 to Cys328. N-linked (GlcNAc...) asparagine glycosylation occurs at Asn296. 2 disordered regions span residues 350–391 (TTTL…GLTS) and 425–464 (TSVQTSISGRTARTSHQPPLLHPGGKSNAKIEKNGRKFPP). The span at 378-391 (TPPSKSWLSPGLTS) shows a compositional bias: polar residues. Residues Asn485 and Asn506 are each glycosylated (N-linked (GlcNAc...) asparagine). The helical transmembrane segment at 585–605 (LLLVVTSTACVIVVPLICFLL) threads the bilayer. At 606–681 (YKVCKLQCTS…SDGCRTEYYG (76 aa)) the chain is on the cytoplasmic side.

As to expression, detected in the outer plexiform layer (OPL) of the retina, where it localizes to rod and cone ON-bipolar cells (at protein level). Also detected in bipolar cell bodies in the inner retinal layer (INL) (at protein level).

It is found in the cell projection. The protein localises to the dendrite. Its subcellular location is the perikaryon. The protein resides in the endoplasmic reticulum membrane. Functionally, plays a role in the synapse formation and synaptic transmission between cone photoreceptor cells and retinal bipolar cells. Required for normal transmission of a light-evoked stimulus from the cone photoreceptor cells to the ON-bipolar cells and ON-ganglion cells in the inner retina. Required in retinal ON-bipolar cells for normal localization of the cation channel TRPM1 at dendrite tips. Seems to play a specific role in synaptic contacts made by ON-bipolar cells with cone photoreceptor pedicles. May also have a role in cone synapse formation. Might facilitate FGFR1 exit from the endoplasmic reticulum to the Golgi. Could be a regulator of the FGFRs. The sequence is that of Leucine-rich repeat, immunoglobulin-like domain and transmembrane domain-containing protein 3 from Mus musculus (Mouse).